The sequence spans 191 residues: MSTKNRDRLVVTEDSDDDNEREEMSSGGESGEEGPSSVDGGAGDADETVAFPAIERRKKKVIKKLTKKEQSLKKSVKEYRIKLALVKPDITTDREKERNLRRVATKGVVQLFNAVSDRQKTMSDAVKEKMTARERREARQRFDGKNFDSDRFADSGYVGAKKEVKGEDDDGEDQMDIGEEQIDTGNYSDED.

Positions M1–V11 are enriched in basic and acidic residues. The disordered stretch occupies residues M1–P52. Positions A53–A84 form a coiled coil. Residues Q119–A153 show a composition bias toward basic and acidic residues. Residues Q119–D191 are disordered. A compositionally biased stretch (acidic residues) spans G166–D191.

It belongs to the RRP15 family.

This is RRP15-like protein from Caenorhabditis elegans.